A 594-amino-acid chain; its full sequence is NADH-quinone oxidoreductase subunit C/D (594 aa).

An NADH dehydrogenase I subunit C region spans residues 1–185 (MTTGSALYIP…DPFSLNLAKQ (185 aa)). The segment at 209–594 (DYMFLNLGPN…IDFVMADVDR (386 aa)) is NADH dehydrogenase I subunit D.

It in the N-terminal section; belongs to the complex I 30 kDa subunit family. This sequence in the C-terminal section; belongs to the complex I 49 kDa subunit family. In terms of assembly, NDH-1 is composed of 13 different subunits. Subunits NuoB, CD, E, F, and G constitute the peripheral sector of the complex.

Its subcellular location is the cell inner membrane. The catalysed reaction is a quinone + NADH + 5 H(+)(in) = a quinol + NAD(+) + 4 H(+)(out). Its function is as follows. NDH-1 shuttles electrons from NADH, via FMN and iron-sulfur (Fe-S) centers, to quinones in the respiratory chain. The immediate electron acceptor for the enzyme in this species is believed to be ubiquinone. Couples the redox reaction to proton translocation (for every two electrons transferred, four hydrogen ions are translocated across the cytoplasmic membrane), and thus conserves the redox energy in a proton gradient. In Pseudomonas fluorescens (strain Pf0-1), this protein is NADH-quinone oxidoreductase subunit C/D.